A 271-amino-acid chain; its full sequence is Glutamate racemase (271 aa).

Residues 10-11 and 42-43 each bind substrate; these read DS and YG. The active-site Proton donor/acceptor is C73. Residue 74–75 participates in substrate binding; it reads NT. Residue C183 is the Proton donor/acceptor of the active site. 184–185 lines the substrate pocket; the sequence is TH.

Belongs to the aspartate/glutamate racemases family.

The enzyme catalyses L-glutamate = D-glutamate. The protein operates within cell wall biogenesis; peptidoglycan biosynthesis. Functionally, provides the (R)-glutamate required for cell wall biosynthesis. This Streptococcus thermophilus (strain ATCC BAA-250 / LMG 18311) protein is Glutamate racemase.